The sequence spans 262 residues: Phosphatidylglycerol--prolipoprotein diacylglyceryl transferase (262 aa).

The next 4 membrane-spanning stretches (helical) occupy residues 9 to 29, 41 to 61, 80 to 100, and 109 to 129; these read LGPL…ILAV, IIPD…ILGA, IFAI…GALV, and LINT…AQSL. An a 1,2-diacyl-sn-glycero-3-phospho-(1'-sn-glycerol)-binding site is contributed by Arg-131. 3 helical membrane-spanning segments follow: residues 167–187, 197–217, and 226–246; these read QPTF…ILIF, GHIT…IEGM, and GFRV…MIVI.

Belongs to the Lgt family.

It is found in the cell membrane. It catalyses the reaction L-cysteinyl-[prolipoprotein] + a 1,2-diacyl-sn-glycero-3-phospho-(1'-sn-glycerol) = an S-1,2-diacyl-sn-glyceryl-L-cysteinyl-[prolipoprotein] + sn-glycerol 1-phosphate + H(+). The protein operates within protein modification; lipoprotein biosynthesis (diacylglyceryl transfer). Catalyzes the transfer of the diacylglyceryl group from phosphatidylglycerol to the sulfhydryl group of the N-terminal cysteine of a prolipoprotein, the first step in the formation of mature lipoproteins. The sequence is that of Phosphatidylglycerol--prolipoprotein diacylglyceryl transferase from Streptococcus pneumoniae serotype 4 (strain ATCC BAA-334 / TIGR4).